The chain runs to 210 residues: Dephospho-CoA kinase (210 aa).

The 199-residue stretch at 4-202 folds into the DPCK domain; that stretch reads WVGLTGGIGS…AFYSGIFASK (199 aa). ATP is bound at residue 12–17; the sequence is GSGKSA.

It belongs to the CoaE family.

Its subcellular location is the cytoplasm. It carries out the reaction 3'-dephospho-CoA + ATP = ADP + CoA + H(+). It functions in the pathway cofactor biosynthesis; coenzyme A biosynthesis; CoA from (R)-pantothenate: step 5/5. In terms of biological role, catalyzes the phosphorylation of the 3'-hydroxyl group of dephosphocoenzyme A to form coenzyme A. This Neisseria meningitidis serogroup A / serotype 4A (strain DSM 15465 / Z2491) protein is Dephospho-CoA kinase.